A 522-amino-acid polypeptide reads, in one-letter code: Lysophospholipid acyltransferase LPCAT4 (522 aa).

Transmembrane regions (helical) follow at residues 43 to 63 (ILGF…LFLM) and 92 to 112 (HLIY…WITI). Residues 130-135 (HSTFFD) carry the HXXXXD motif motif. N-linked (GlcNAc...) asparagine glycans are attached at residues Asn-166 and Asn-517. Residues 496–522 (GRRKPPHIQQNGGCSGKNNPRNQSKMD) are disordered. Polar residues predominate over residues 503-522 (IQQNGGCSGKNNPRNQSKMD).

The protein belongs to the 1-acyl-sn-glycerol-3-phosphate acyltransferase family.

It is found in the endoplasmic reticulum membrane. It carries out the reaction a 1-acyl-sn-glycero-3-phosphoethanolamine + an acyl-CoA = a 1,2-diacyl-sn-glycero-3-phosphoethanolamine + CoA. The enzyme catalyses a 1-O-(1Z-alkenyl)-sn-glycero-3-phosphoethanolamine + an acyl-CoA = a 1-O-(1Z-alkenyl)-2-acyl-sn-glycero-3-phosphoethanolamine + CoA. It catalyses the reaction a 1-acyl-sn-glycero-3-phosphocholine + an acyl-CoA = a 1,2-diacyl-sn-glycero-3-phosphocholine + CoA. The catalysed reaction is a 1-O-alkyl-sn-glycero-3-phosphocholine + acetyl-CoA = a 1-O-alkyl-2-acetyl-sn-glycero-3-phosphocholine + CoA. It carries out the reaction a 1-acyl-sn-glycero-3-phospho-L-serine + an acyl-CoA = a 1,2-diacyl-sn-glycero-3-phospho-L-serine + CoA. It participates in lipid metabolism; phospholipid metabolism. Displays acyl-CoA-dependent lysophospholipid acyltransferase activity with a subset of lysophospholipids as substrates. Prefers long chain acyl-CoAs (C16, C18) as acyl donors. This Xenopus tropicalis (Western clawed frog) protein is Lysophospholipid acyltransferase LPCAT4 (lpcat4).